A 304-amino-acid polypeptide reads, in one-letter code: Retrotransposon Gag-like protein 4 (304 aa).

The segment at 276 to 293 (QLCVYCNQAGHFTRDCLA) adopts a CCHC-type zinc-finger fold.

In adults, expressed in brain, eye, kidney, ovary and testis. Weakly expressed in thymus, heart and muscle.

Its function is as follows. Involved in cognitive function in the brain, possibly via the noradrenergic system. The polypeptide is Retrotransposon Gag-like protein 4 (Mus musculus (Mouse)).